Reading from the N-terminus, the 485-residue chain is Glutamate--tRNA ligase 1 (485 aa).

The 'HIGH' region motif lies at 9–19 (PSPTGHLHIGG). The short motif at 250 to 254 (KMSKR) is the 'KMSKS' region element. Residue lysine 253 coordinates ATP.

This sequence belongs to the class-I aminoacyl-tRNA synthetase family. Glutamate--tRNA ligase type 1 subfamily. Monomer.

The protein resides in the cytoplasm. It catalyses the reaction tRNA(Glu) + L-glutamate + ATP = L-glutamyl-tRNA(Glu) + AMP + diphosphate. Catalyzes the attachment of glutamate to tRNA(Glu) in a two-step reaction: glutamate is first activated by ATP to form Glu-AMP and then transferred to the acceptor end of tRNA(Glu). The sequence is that of Glutamate--tRNA ligase 1 from Caldicellulosiruptor saccharolyticus (strain ATCC 43494 / DSM 8903 / Tp8T 6331).